Reading from the N-terminus, the 316-residue chain is Transaldolase (316 aa).

Lys-132 serves as the catalytic Schiff-base intermediate with substrate.

This sequence belongs to the transaldolase family. Type 1 subfamily. In terms of assembly, homodimer.

It localises to the cytoplasm. The catalysed reaction is D-sedoheptulose 7-phosphate + D-glyceraldehyde 3-phosphate = D-erythrose 4-phosphate + beta-D-fructose 6-phosphate. It functions in the pathway carbohydrate degradation; pentose phosphate pathway; D-glyceraldehyde 3-phosphate and beta-D-fructose 6-phosphate from D-ribose 5-phosphate and D-xylulose 5-phosphate (non-oxidative stage): step 2/3. Functionally, transaldolase is important for the balance of metabolites in the pentose-phosphate pathway. This Aeromonas salmonicida (strain A449) protein is Transaldolase.